Consider the following 547-residue polypeptide: Chaperonin GroEL 2 (547 aa).

ATP is bound by residues 30 to 33, K51, 87 to 91, G415, 479 to 481, and D495; these read TLGP, DGTTT, and NAA. A disordered region spans residues 526–547; that stretch reads KEESAAPAGGGMGGMGGMGGMM. Residues 533-547 show a composition bias toward gly residues; that stretch reads AGGGMGGMGGMGGMM.

Belongs to the chaperonin (HSP60) family. As to quaternary structure, forms a cylinder of 14 subunits composed of two heptameric rings stacked back-to-back. Interacts with the co-chaperonin GroES.

It is found in the cytoplasm. The catalysed reaction is ATP + H2O + a folded polypeptide = ADP + phosphate + an unfolded polypeptide.. Together with its co-chaperonin GroES, plays an essential role in assisting protein folding. The GroEL-GroES system forms a nano-cage that allows encapsulation of the non-native substrate proteins and provides a physical environment optimized to promote and accelerate protein folding. This chain is Chaperonin GroEL 2, found in Anaeromyxobacter sp. (strain Fw109-5).